The primary structure comprises 242 residues: MTVPTFLRKVTLREICVIEEYVDVQYRAIEALMDTLPSTDLVRLTVANALVSYQLSSSGEDWWREFSSYFRERRPRDIVREYARFLPRSRGNRRLIRQKLRRLHRAKAFLEELSWQDAKSYYRDMNRLRLDLARVLNADPESKTIVFTVKMFGYALRAITGRFRPYPFEIPIPVDARIERITRRITNDDPQLYWDSIARRTGIPPLHLDSILWVGTSRDPEVKRLLAKVLPKLIGELEMLGN.

8-oxoguanine-binding residues include Q25, S52, and W63. The helix-hairpin-helix stretch occupies residues 119-183; sequence KSYYRDMNRL…VDARIERITR (65 aa). The active-site Schiff-base intermediate with DNA is K143. 8-oxoguanine-binding residues include F147 and P173. D175 is a catalytic residue. 8-oxoguanine-binding residues include D209 and W213.

It belongs to the archaeal N-glycosylase/DNA lyase (AGOG) family.

The catalysed reaction is 2'-deoxyribonucleotide-(2'-deoxyribose 5'-phosphate)-2'-deoxyribonucleotide-DNA = a 3'-end 2'-deoxyribonucleotide-(2,3-dehydro-2,3-deoxyribose 5'-phosphate)-DNA + a 5'-end 5'-phospho-2'-deoxyribonucleoside-DNA + H(+). Its function is as follows. DNA repair enzyme that is part of the base excision repair (BER) pathway; protects from oxidative damage by removing the major product of DNA oxidation, 8-oxoguanine (GO), from single- and double-stranded DNA substrates. The protein is N-glycosylase/DNA lyase of Methanopyrus kandleri (strain AV19 / DSM 6324 / JCM 9639 / NBRC 100938).